The following is a 458-amino-acid chain: Argininosuccinate lyase (458 aa).

The protein belongs to the lyase 1 family. Argininosuccinate lyase subfamily.

Its subcellular location is the cytoplasm. It carries out the reaction 2-(N(omega)-L-arginino)succinate = fumarate + L-arginine. It participates in amino-acid biosynthesis; L-arginine biosynthesis; L-arginine from L-ornithine and carbamoyl phosphate: step 3/3. This is Argininosuccinate lyase from Neisseria gonorrhoeae (strain ATCC 700825 / FA 1090).